The primary structure comprises 151 residues: Probable cGMP 3',5'-cyclic phosphodiesterase subunit delta (151 aa).

It belongs to the PDE6D/unc-119 family. Interacts with Pde6.

It is found in the nucleus. Its subcellular location is the cytoplasm. The polypeptide is Probable cGMP 3',5'-cyclic phosphodiesterase subunit delta (Drosophila simulans (Fruit fly)).